The primary structure comprises 546 residues: CTP synthase (546 aa).

Residues 1 to 265 (MTKYVFVTGG…DEIVCHKLNI (265 aa)) are amidoligase domain. Serine 13 provides a ligand contact to CTP. UTP is bound at residue serine 13. Residues 14–19 (SLGKGI) and aspartate 71 contribute to the ATP site. The Mg(2+) site is built by aspartate 71 and glutamate 139. CTP-binding positions include 146–148 (DIE), 186–191 (KTKPTQ), and lysine 222. UTP contacts are provided by residues 186 to 191 (KTKPTQ) and lysine 222. The Glutamine amidotransferase type-1 domain occupies 290 to 543 (KIAFVGKYVD…VKAALANQKA (254 aa)). L-glutamine is bound at residue glycine 351. Cysteine 378 functions as the Nucleophile; for glutamine hydrolysis in the catalytic mechanism. L-glutamine is bound by residues 379 to 382 (LGMQ), glutamate 402, and arginine 469. Active-site residues include histidine 516 and glutamate 518.

It belongs to the CTP synthase family. Homotetramer.

It catalyses the reaction UTP + L-glutamine + ATP + H2O = CTP + L-glutamate + ADP + phosphate + 2 H(+). The catalysed reaction is L-glutamine + H2O = L-glutamate + NH4(+). The enzyme catalyses UTP + NH4(+) + ATP = CTP + ADP + phosphate + 2 H(+). It participates in pyrimidine metabolism; CTP biosynthesis via de novo pathway; CTP from UDP: step 2/2. Allosterically activated by GTP, when glutamine is the substrate; GTP has no effect on the reaction when ammonia is the substrate. The allosteric effector GTP functions by stabilizing the protein conformation that binds the tetrahedral intermediate(s) formed during glutamine hydrolysis. Inhibited by the product CTP, via allosteric rather than competitive inhibition. Functionally, catalyzes the ATP-dependent amination of UTP to CTP with either L-glutamine or ammonia as the source of nitrogen. Regulates intracellular CTP levels through interactions with the four ribonucleotide triphosphates. The polypeptide is CTP synthase (Dechloromonas aromatica (strain RCB)).